The chain runs to 177 residues: Large ribosomal subunit protein uL10 (177 aa).

Belongs to the universal ribosomal protein uL10 family. As to quaternary structure, part of the ribosomal stalk of the 50S ribosomal subunit. The N-terminus interacts with L11 and the large rRNA to form the base of the stalk. The C-terminus forms an elongated spine to which L12 dimers bind in a sequential fashion forming a multimeric L10(L12)X complex.

Functionally, forms part of the ribosomal stalk, playing a central role in the interaction of the ribosome with GTP-bound translation factors. The polypeptide is Large ribosomal subunit protein uL10 (Xanthomonas axonopodis pv. citri (strain 306)).